A 364-amino-acid chain; its full sequence is sn-glycerol-3-phosphate import ATP-binding protein UgpC (364 aa).

In terms of domain architecture, ABC transporter spans 4–235 (VVLRNVRKTY…PATTFVASFI (232 aa)). 37–44 (GPSGCGKS) is a binding site for ATP.

It belongs to the ABC transporter superfamily. sn-glycerol-3-phosphate importer (TC 3.A.1.1.3) family. As to quaternary structure, the complex is composed of two ATP-binding proteins (UgpC), two transmembrane proteins (UgpA and UgpE) and a solute-binding protein (UgpB).

Its subcellular location is the cell inner membrane. It carries out the reaction sn-glycerol 3-phosphate(out) + ATP + H2O = sn-glycerol 3-phosphate(in) + ADP + phosphate + H(+). Functionally, part of the ABC transporter complex UgpBAEC involved in sn-glycerol-3-phosphate (G3P) import. Responsible for energy coupling to the transport system. This is sn-glycerol-3-phosphate import ATP-binding protein UgpC from Rhodopseudomonas palustris (strain HaA2).